Here is a 245-residue protein sequence, read N- to C-terminus: Ubiquinone/menaquinone biosynthesis C-methyltransferase UbiE (245 aa).

Residues T71, D92, and 118-119 (DA) contribute to the S-adenosyl-L-methionine site.

It belongs to the class I-like SAM-binding methyltransferase superfamily. MenG/UbiE family.

The catalysed reaction is a 2-demethylmenaquinol + S-adenosyl-L-methionine = a menaquinol + S-adenosyl-L-homocysteine + H(+). The enzyme catalyses a 2-methoxy-6-(all-trans-polyprenyl)benzene-1,4-diol + S-adenosyl-L-methionine = a 5-methoxy-2-methyl-3-(all-trans-polyprenyl)benzene-1,4-diol + S-adenosyl-L-homocysteine + H(+). The protein operates within quinol/quinone metabolism; menaquinone biosynthesis; menaquinol from 1,4-dihydroxy-2-naphthoate: step 2/2. It functions in the pathway cofactor biosynthesis; ubiquinone biosynthesis. In terms of biological role, methyltransferase required for the conversion of demethylmenaquinol (DMKH2) to menaquinol (MKH2) and the conversion of 2-polyprenyl-6-methoxy-1,4-benzoquinol (DDMQH2) to 2-polyprenyl-3-methyl-6-methoxy-1,4-benzoquinol (DMQH2). In Neisseria meningitidis serogroup B (strain ATCC BAA-335 / MC58), this protein is Ubiquinone/menaquinone biosynthesis C-methyltransferase UbiE.